The chain runs to 546 residues: Acyl-CoA ligase oryP (546 aa).

ATP-binding positions include 166–174, 300–305, and Arg403; these read TSGTTGAPK and QFWLNL. CoA contacts are provided by residues 412–414 and 482–484; these read WDH and LLR. Residue Lys499 participates in ATP binding.

The protein belongs to the ATP-dependent AMP-binding enzyme family.

It participates in secondary metabolite biosynthesis. Its function is as follows. Acyl-CoA ligase; part of the gene cluster that mediates the biosynthesis of oryzines, natural products with an unusual maleidride backbone. The two subunits of the fungal fatty acid synthase oryfasA and oryfasB probably form octenoic acid. This fatty acid is most likely activated by the acyl-CoA ligase oryP to give octenyl-CoA before the citrate synthase-like protein oryE catalyzes condensation with oxaloacetate to form tricarboxylic acid. The next steps of the pathways are conjectural, but a favorite possible route has been proposed, beginning with decarboxylation and concomitant dehydration by the decarboxylase oryM, followed by tautomerization, which may lead to the production of a diene intermediate. Reduction of this diene intermediate could give the known metabolite piliformic acid. On the pathway to oryzine B and oryzine A, however, hydroxylation of the diene by the alpha-ketoglutarate-dependent dioxygenase oryG and lactonisation by the lactonohydrolases oryH or oryL could give oryzine B directly. Finally, enoyl reduction by the dehydrogenase oryD would then convert oryzine B into oryzine A. This chain is Acyl-CoA ligase oryP, found in Aspergillus oryzae (strain ATCC 42149 / RIB 40) (Yellow koji mold).